The primary structure comprises 374 residues: Transcription termination factor 1, mitochondrial (374 aa).

A mitochondrion-targeting transit peptide spans 1–37 (MASRNIWRVRRNFLFDLRGWVPQYSAEVFLKSIPFRP). Interaction with DNA regions lie at residues 146-147 (RS), 224-228 (QSTKR), 301-308 (SEKKFNDK), 332-335 (SIHT), and 361-368 (SQRRYEAK).

Belongs to the mTERF family. As to quaternary structure, monomer. Is a phosphoprotein. While the DNA-binding activity is unaffected by the phosphorylation/dephosphorylation state, only the phosphorylated form of the protein is active for termination activity. Functioning seems to be regulated by phosphorylation.

Its subcellular location is the mitochondrion. In terms of biological role, transcription termination factor. Binds to a 28 bp region within the tRNA(Leu(uur)) gene at a position immediately adjacent to and downstream of the 16S rRNA gene; this region comprises a tridecamer sequence critical for directing accurate termination. Binds DNA along the major grove and promotes DNA bending and partial unwinding. Promotes base flipping. Transcription termination activity appears to be polarized with highest specificity for transcripts initiated on the light strand. This is Transcription termination factor 1, mitochondrial (Mterf1) from Rattus norvegicus (Rat).